The following is a 280-amino-acid chain: Protein IMPACT homolog (280 aa).

Positions 9 to 109 (DELLALESIY…QAAAERESKL (101 aa)) constitute an RWD domain.

It belongs to the IMPACT family. Interacts (via N-terminus) with gcn1 (via C-terminus); this interaction reduces the gcn1-gcn20 complex formation and prevents the interaction of gcn1 with gcn2 protein kinase and gcn2 activation in amino acid-starved cells. Interacts (via C-terminus) with act1; this interaction occurs in a gcn1-independent manner. Interacts with rpl39; this interaction occurs in a gcn1-independent manner. Associates (via middle region) with ribosomes; this association occurs in a gcn1-independent manner and persists under amino acid starvation conditions.

Its subcellular location is the cytoplasm. The protein localises to the nucleus. Translational regulator that ensures constant high levels of translation under amino acid starvation. Plays a role as a negative regulator of the gcn2 kinase activity; impairs gcn1-mediated gcn2 activation, and hence gcn2-mediated eIF-2-alpha phosphorylation in amino acid-starved cells and subsequent down-regulation of protein synthesis. In normal conditions, it resides in a actin complex and has no activity. This is Protein IMPACT homolog (yih1) from Schizosaccharomyces pombe (strain 972 / ATCC 24843) (Fission yeast).